Consider the following 314-residue polypeptide: Ribosomal protein L11 methyltransferase (314 aa).

Positions 161, 182, 204, and 248 each coordinate S-adenosyl-L-methionine.

It belongs to the methyltransferase superfamily. PrmA family.

The protein localises to the cytoplasm. The catalysed reaction is L-lysyl-[protein] + 3 S-adenosyl-L-methionine = N(6),N(6),N(6)-trimethyl-L-lysyl-[protein] + 3 S-adenosyl-L-homocysteine + 3 H(+). Methylates ribosomal protein L11. This chain is Ribosomal protein L11 methyltransferase, found in Listeria monocytogenes serotype 4b (strain CLIP80459).